The sequence spans 491 residues: Probable glycine dehydrogenase (decarboxylating) subunit 2 (491 aa).

Lysine 273 is modified (N6-(pyridoxal phosphate)lysine).

It belongs to the GcvP family. C-terminal subunit subfamily. As to quaternary structure, the glycine cleavage system is composed of four proteins: P, T, L and H. In this organism, the P 'protein' is a heterodimer of two subunits. Pyridoxal 5'-phosphate is required as a cofactor.

The catalysed reaction is N(6)-[(R)-lipoyl]-L-lysyl-[glycine-cleavage complex H protein] + glycine + H(+) = N(6)-[(R)-S(8)-aminomethyldihydrolipoyl]-L-lysyl-[glycine-cleavage complex H protein] + CO2. Its function is as follows. The glycine cleavage system catalyzes the degradation of glycine. The P protein binds the alpha-amino group of glycine through its pyridoxal phosphate cofactor; CO(2) is released and the remaining methylamine moiety is then transferred to the lipoamide cofactor of the H protein. The protein is Probable glycine dehydrogenase (decarboxylating) subunit 2 of Bacillus cereus (strain G9842).